Here is a 253-residue protein sequence, read N- to C-terminus: MEKLLIVNADDFGLCKGQNYGIIDAFRNGVVSSTTAMMNSVDINHATELSAQYPALPVGMHFVLTFGRPLTAMPSLTDANGELGKWLWQRAGAGTLDLNEIAQELECQFERFSAVFGRPPTHIDSHHHVHMLPQIYPLVAAFAREKSLPLRIDRHEVQQHGLTLDNPRSSEWFNAGFYGENLSEPSFLQLLEHADQQGVNSLEIMCHPAFIDQTLMTSGYCYPRLTELAILTSPTLKPAIAQRGYRLGSFLDC.

Residues histidine 61 and histidine 126 each contribute to the Mg(2+) site.

The protein belongs to the YdjC deacetylase family. ChbG subfamily. Homodimer. Mg(2+) is required as a cofactor.

The protein localises to the cytoplasm. It catalyses the reaction N,N'-diacetylchitobiose + H2O = N-acetyl-beta-D-glucosaminyl-(1-&gt;4)-D-glucosamine + acetate. The catalysed reaction is diacetylchitobiose-6'-phosphate + H2O = N'-monoacetylchitobiose-6'-phosphate + acetate. It functions in the pathway glycan degradation; chitin degradation. Its function is as follows. Involved in the degradation of chitin. ChbG is essential for growth on the acetylated chitooligosaccharides chitobiose and chitotriose but is dispensable for growth on cellobiose and chitosan dimer, the deacetylated form of chitobiose. Deacetylation of chitobiose-6-P and chitotriose-6-P is necessary for both the activation of the chb promoter by the regulatory protein ChbR and the hydrolysis of phosphorylated beta-glucosides by the phospho-beta-glucosidase ChbF. Catalyzes the removal of only one acetyl group from chitobiose-6-P to yield monoacetylchitobiose-6-P, the inducer of ChbR and the substrate of ChbF. In Yersinia pestis bv. Antiqua (strain Angola), this protein is Chitooligosaccharide deacetylase.